Here is a 760-residue protein sequence, read N- to C-terminus: Cyclin-D-binding Myb-like transcription factor 1 (760 aa).

The interval 1–237 (MSTVEEDSDT…TPEEIEKLKE (237 aa)) is interaction with CCND2. The interval 24–63 (DTDGNLILHCPQNDPDEIDSEDSTEPPHKRLCLSSEDDQS) is disordered. The span at 37-47 (DPDEIDSEDST) shows a compositional bias: acidic residues. A required for transcriptional activation region spans residues 87 to 170 (VTMTATTEVA…IDILMNNIER (84 aa)). Residues 87–458 (VTMTATTEVA…DNTAISPSPM (372 aa)) are required for DNA-binding. The interval 176–690 (GIKDATEIIF…PTIVHQVHQT (515 aa)) is interaction with CCND1, CCND2 and CCND3. In terms of domain architecture, Myb-like 1 spans 225–263 (GKYTPEEIEKLKELRIKHGNDWATIGAALGRSASSVKDR). Positions 268-333 (KDTCNTGKWT…KWLNYLNWKQ (66 aa)) constitute an HTH myb-type domain. The segment at residues 306–329 (WAAVAERVGTRSEKQCRSKWLNYL) is a DNA-binding region (H-T-H motif). Residues 339 to 388 (WTKEDEINLILRIAELDVADENDINWDLLAEGWSSVRSPQWLRSKWWTIK) form the Myb-like 2 domain. Residues 459 to 760 (AALQIPVQIT…KDVEDLVNCH (302 aa)) are required for transcriptional activation. Disordered regions lie at residues 593–614 (DSDL…DTFP) and 738–760 (IGSS…VNCH).

Belongs to the DMTF1 family. As to quaternary structure, interacts with the D-type cyclins CCND1, CCND2 and CCND3. Interaction with D-type cyclins may modulate transcriptional activation by this protein. Phosphorylated by the cyclin-D2/CDK4, cyclin-D3/CDK4 and cyclin-D2/CDK6 complexes and to a lesser extent by the cyclin-D1/CDK4 complex.

Its subcellular location is the nucleus. Transcriptional activator which activates the CDKN2A/ARF locus in response to Ras-Raf signaling, thereby promoting p53/TP53-dependent growth arrest. Binds to the consensus sequence 5'-CCCG[GT]ATGT-3'. This is Cyclin-D-binding Myb-like transcription factor 1 (Dmtf1) from Rattus norvegicus (Rat).